The following is a 278-amino-acid chain: Orotidine 5'-phosphate decarboxylase (278 aa).

The Proton donor role is filled by lysine 95.

The protein belongs to the OMP decarboxylase family. Type 2 subfamily.

It carries out the reaction orotidine 5'-phosphate + H(+) = UMP + CO2. Its pathway is pyrimidine metabolism; UMP biosynthesis via de novo pathway; UMP from orotate: step 2/2. This is Orotidine 5'-phosphate decarboxylase from Mycobacterium ulcerans (strain Agy99).